Consider the following 229-residue polypeptide: DNA repair protein RecO (229 aa).

It belongs to the RecO family.

Its function is as follows. Involved in DNA repair and RecF pathway recombination. This is DNA repair protein RecO from Pseudomonas fluorescens (strain ATCC BAA-477 / NRRL B-23932 / Pf-5).